The chain runs to 363 residues: Flagellar P-ring protein (363 aa).

Residues 1 to 20 form the signal peptide; sequence MKKFTLLLLCFVLPMTSAYA.

The protein belongs to the FlgI family. In terms of assembly, the basal body constitutes a major portion of the flagellar organelle and consists of four rings (L,P,S, and M) mounted on a central rod.

It localises to the periplasm. Its subcellular location is the bacterial flagellum basal body. In terms of biological role, assembles around the rod to form the L-ring and probably protects the motor/basal body from shearing forces during rotation. The protein is Flagellar P-ring protein of Vibrio vulnificus (strain YJ016).